Reading from the N-terminus, the 488-residue chain is Protein nucleotidyltransferase YdiU (488 aa).

The ATP site is built by G91, G93, R94, K114, D126, G127, R177, and R184. D253 functions as the Proton acceptor in the catalytic mechanism. Mg(2+) is bound by residues N254 and D263. Residue D263 participates in ATP binding.

Belongs to the SELO family. Requires Mg(2+) as cofactor. Mn(2+) serves as cofactor.

The catalysed reaction is L-seryl-[protein] + ATP = 3-O-(5'-adenylyl)-L-seryl-[protein] + diphosphate. The enzyme catalyses L-threonyl-[protein] + ATP = 3-O-(5'-adenylyl)-L-threonyl-[protein] + diphosphate. It carries out the reaction L-tyrosyl-[protein] + ATP = O-(5'-adenylyl)-L-tyrosyl-[protein] + diphosphate. It catalyses the reaction L-histidyl-[protein] + UTP = N(tele)-(5'-uridylyl)-L-histidyl-[protein] + diphosphate. The catalysed reaction is L-seryl-[protein] + UTP = O-(5'-uridylyl)-L-seryl-[protein] + diphosphate. The enzyme catalyses L-tyrosyl-[protein] + UTP = O-(5'-uridylyl)-L-tyrosyl-[protein] + diphosphate. Its function is as follows. Nucleotidyltransferase involved in the post-translational modification of proteins. It can catalyze the addition of adenosine monophosphate (AMP) or uridine monophosphate (UMP) to a protein, resulting in modifications known as AMPylation and UMPylation. This chain is Protein nucleotidyltransferase YdiU, found in Bacillus cereus (strain G9842).